The chain runs to 51 residues: Large ribosomal subunit protein eL39 (51 aa).

It belongs to the eukaryotic ribosomal protein eL39 family.

The protein is Large ribosomal subunit protein eL39 of Pyrobaculum islandicum (strain DSM 4184 / JCM 9189 / GEO3).